Here is a 369-residue protein sequence, read N- to C-terminus: S-(hydroxymethyl)glutathione dehydrogenase (369 aa).

Cys-40, His-62, Cys-92, Cys-95, Cys-98, Cys-106, and Cys-169 together coordinate Zn(2+).

The protein belongs to the zinc-containing alcohol dehydrogenase family. Class-III subfamily. In terms of assembly, homodimer. It depends on Zn(2+) as a cofactor.

Its subcellular location is the cytoplasm. The enzyme catalyses S-(hydroxymethyl)glutathione + NADP(+) = S-formylglutathione + NADPH + H(+). It catalyses the reaction S-(hydroxymethyl)glutathione + NAD(+) = S-formylglutathione + NADH + H(+). The catalysed reaction is a primary alcohol + NAD(+) = an aldehyde + NADH + H(+). It carries out the reaction a secondary alcohol + NAD(+) = a ketone + NADH + H(+). The enzyme catalyses S-nitrosoglutathione + NADH + H(+) = S-(hydroxysulfenamide)glutathione + NAD(+). Functionally, has high formaldehyde dehydrogenase activity in the presence of glutathione and catalyzes the oxidation of normal alcohols in a reaction that is not GSH-dependent. In addition, hemithiolacetals other than those formed from GSH, including omega-thiol fatty acids, also are substrates. Also acts as a S-nitroso-glutathione reductase by catalyzing the NADH-dependent reduction of S-nitrosoglutathione. In Escherichia coli O6:H1 (strain CFT073 / ATCC 700928 / UPEC), this protein is S-(hydroxymethyl)glutathione dehydrogenase (frmA).